The following is a 289-amino-acid chain: Geranylgeranyl diphosphate synthase (289 aa).

Positions 43 and 73 each coordinate isopentenyl diphosphate. Mg(2+)-binding residues include aspartate 80 and aspartate 86. Arginine 91 contributes to the (2E,6E)-farnesyl diphosphate binding site. Isopentenyl diphosphate is bound at residue arginine 92. 3 residues coordinate (2E,6E)-farnesyl diphosphate: lysine 170, threonine 171, and glutamine 205.

Belongs to the FPP/GGPP synthase family. The cofactor is Mg(2+).

It catalyses the reaction isopentenyl diphosphate + (2E,6E)-farnesyl diphosphate = (2E,6E,10E)-geranylgeranyl diphosphate + diphosphate. It participates in isoprenoid biosynthesis; geranylgeranyl diphosphate biosynthesis; geranylgeranyl diphosphate from farnesyl diphosphate and isopentenyl diphosphate: step 1/1. Its function is as follows. Catalyzes the condensation of farnesyl diphosphate (FPP) and isopentenyl diphosphate (IPP) to yield geranylgeranyl diphosphate (GGPP) needed for biosynthesis of carotenoids and diterpenes. This is Geranylgeranyl diphosphate synthase (crtE) from Rhodobacter capsulatus (strain ATCC BAA-309 / NBRC 16581 / SB1003).